The following is a 416-amino-acid chain: Adipocyte plasma membrane-associated protein (416 aa).

Residues 1–39 (MNEPEGLRFRRLNRPQIITDELQEPQYKGTSTYSGKVFR) are Cytoplasmic-facing. A helical membrane pass occupies residues 40-60 (VILVTLGGCLILPLLVVFFLL). Residues 61 to 412 (ESPIHPELLS…FRSPYLCKLD (352 aa)) lie on the Extracellular side of the membrane. An N-linked (GlcNAc...) asparagine glycan is attached at Asn-160.

Belongs to the strictosidine synthase family.

The protein localises to the membrane. The sequence is that of Adipocyte plasma membrane-associated protein (apmap) from Salmo salar (Atlantic salmon).